A 225-amino-acid chain; its full sequence is Large ribosomal subunit protein uL4 (225 aa).

The segment at 46-102 is disordered; it reads KRQGTHATKGRGEVRGGGRKPFRQKGTGRARQGSIRAPHFTGGGTVHGPQPRDYSQR. Positions 62–73 are enriched in basic residues; the sequence is GGRKPFRQKGTG.

This sequence belongs to the universal ribosomal protein uL4 family. As to quaternary structure, part of the 50S ribosomal subunit.

Its function is as follows. One of the primary rRNA binding proteins, this protein initially binds near the 5'-end of the 23S rRNA. It is important during the early stages of 50S assembly. It makes multiple contacts with different domains of the 23S rRNA in the assembled 50S subunit and ribosome. Functionally, forms part of the polypeptide exit tunnel. The protein is Large ribosomal subunit protein uL4 of Corynebacterium urealyticum (strain ATCC 43042 / DSM 7109).